Reading from the N-terminus, the 303-residue chain is Thioesterase poxG (303 aa).

It belongs to the lcsJ thioesterase family.

It functions in the pathway secondary metabolite biosynthesis. Its function is as follows. Thioesterase; part of the gene cluster that mediates the biosynthesis of oxaleimides, cytotoxic compounds containing an unusual disubstituted succinimide moiety. The first step of the pathway is provided by the HR-PKS poxF that serves in a new mode of collaborative biosynthesis with the PKS-NRPS poxE, by providing the olefin containing amino acid substrate via the synthesis of an ACP-bound dec-4-enoate. The cytochrome P450 monooxygenase poxM-catalyzed oxidation at the alpha-position creates the enzyme-bound 2-hydroxydec-4-enoyl-ACP thioester, which may be prone to spontaneous hydrolysis to yield 2-hydroxydec-4-enoic acid due to increased electrophilicity of the carbonyl. 2-hydroxydec-4-enoic acid can then be further oxidized by poxM to yield the alpha-ketoacid 2-oxodec-4-enoicacid, which is reductively aminated by the aminotransferase poxL to yield (S,E)-2-aminodec-4-enoic acid. The Hybrid PKS-NRPS synthetase poxE then performs condensation between the octaketide product of its PKS modules and the amino group of (S,E)-2-aminodec-4-enoic acid which is activated and incorporated by the adenylation domain. The resulting aminoacyl product can be cyclized by the Diels-Alderase PoxQ and reductively released by the reductive (R) domain of poxE to yield an aldehyde intermediate. The released aldehyde is then substrate for a Knoevenagel condensation by the hydrolyase poxO followed by an oxidation at the 5-position of the pyrrolidone ring. The presence of the olefin from the amino acid building block allows for migration of the substituted allyl group to occur. This allylic transposition reaction takes place in a conjugate addition, semipinacol-like fashion to yield a succinimide intermediate. Iterative two-electron oxidations of the C7 methyl of the succinimide intermediate to the carboxylic acid can be catalyzed by one of two remaining cytochrome P450 monooxygenasess poxC or poxD to yield oxaleimide A. Subsequent oxidation yields the maleimide scaffold oxaleimide I. Both oxaleimide A and oxaleimide I can undergo oxidative modifications in the decalin ring to yield the series of products oxaleimides B to H. This Penicillium oxalicum (strain 114-2 / CGMCC 5302) (Penicillium decumbens) protein is Thioesterase poxG.